The primary structure comprises 87 residues: Anaphase-promoting complex subunit 11 (87 aa).

Residues 35-77 form an RING-type; atypical zinc finger; the sequence is CVDCKIPGDDCPPVWGVCNHAFHMHCILKWLNANELQQCPMCR.

The protein belongs to the RING-box family. The APC/C is composed of at least 13 subunits that stay tightly associated throughout the cell cycle: anapc1, anapc2, anapc3, anapc4, anapc5, anapc6, anapc7, anapc8, anapc10, anapc11, cdc20, cdc26 and cdh1.

It localises to the nucleus. The protein operates within protein modification; protein ubiquitination. Its function is as follows. Component of the anaphase promoting complex/cyclosome (APC/C), a cell cycle-regulated E3 ubiquitin-protein ligase complex that controls progression through mitosis and the G1 phase of the cell cycle. The polypeptide is Anaphase-promoting complex subunit 11 (anapc11) (Dictyostelium discoideum (Social amoeba)).